A 430-amino-acid polypeptide reads, in one-letter code: Enolase (430 aa).

Q164 is a (2R)-2-phosphoglycerate binding site. E208 (proton donor) is an active-site residue. The Mg(2+) site is built by D245, E288, and D315. K340, R369, S370, and K391 together coordinate (2R)-2-phosphoglycerate. K340 (proton acceptor) is an active-site residue.

It belongs to the enolase family. Mg(2+) is required as a cofactor.

It is found in the cytoplasm. The protein resides in the secreted. It localises to the cell surface. The catalysed reaction is (2R)-2-phosphoglycerate = phosphoenolpyruvate + H2O. It participates in carbohydrate degradation; glycolysis; pyruvate from D-glyceraldehyde 3-phosphate: step 4/5. In terms of biological role, catalyzes the reversible conversion of 2-phosphoglycerate (2-PG) into phosphoenolpyruvate (PEP). It is essential for the degradation of carbohydrates via glycolysis. The polypeptide is Enolase (Thermococcus gammatolerans (strain DSM 15229 / JCM 11827 / EJ3)).